Here is a 421-residue protein sequence, read N- to C-terminus: Acetylglutamate kinase (421 aa).

Residues 1 to 252 are acetylglutamate kinase; it reads MASTKEISQY…PLESSVSITR (252 aa). Residues 59–60, Arg81, and Asn170 each bind substrate; that span reads AG. The N-acetyltransferase domain occupies 274–420; the sequence is ERVIRATTWK…HCAQHPPTLI (147 aa).

This sequence in the N-terminal section; belongs to the acetylglutamate kinase family. ArgB subfamily.

It localises to the cytoplasm. The enzyme catalyses N-acetyl-L-glutamate + ATP = N-acetyl-L-glutamyl 5-phosphate + ADP. The protein operates within amino-acid biosynthesis; L-arginine biosynthesis; N(2)-acetyl-L-ornithine from L-glutamate: step 2/4. This chain is Acetylglutamate kinase (argB), found in Xylella fastidiosa (strain 9a5c).